A 264-amino-acid chain; its full sequence is Ion-translocating oxidoreductase complex subunit B (264 aa).

Residues 5–25 (LINSIAVLAGLGFAVGVMLVI) traverse the membrane as a helical segment. In terms of domain architecture, 4Fe-4S spans 33 to 92 (DSNPLIDDVASLLPGANCGGCGFAGCAACAEAIVEQGAPVNSCPVGGFEVAKQIGALLGQ). [4Fe-4S] cluster contacts are provided by cysteine 50, cysteine 53, cysteine 58, cysteine 75, cysteine 138, cysteine 142, cysteine 148, cysteine 152, cysteine 172, cysteine 175, cysteine 178, cysteine 182, cysteine 217, cysteine 220, cysteine 223, cysteine 227, cysteine 246, cysteine 249, cysteine 252, and cysteine 256. 4Fe-4S ferredoxin-type domains follow at residues 127–162 (VALM…MGED), 163–192 (GFPV…FARD), 207–236 (KDVK…RVTE), and 237–264 (FLAE…IELR).

The protein belongs to the 4Fe4S bacterial-type ferredoxin family. RnfB subfamily. The Rnf complex is probably composed of eight subunits, including RnfA, RnfB, RnfC, RnfD, RnfE and RnfG. The cofactor is [4Fe-4S] cluster.

It is found in the cell membrane. Its function is as follows. Part of a membrane-bound complex that couples electron transfer with translocation of ions across the membrane. Catalyzes Na(+) transport, most probably coupled to electron transfer from reduced ferredoxin to methanophenazine and heterodisulfide reductase. Involved in heterodisulfide reduction during methanogenesis from acetate. This Methanosarcina acetivorans (strain ATCC 35395 / DSM 2834 / JCM 12185 / C2A) protein is Ion-translocating oxidoreductase complex subunit B.